Here is a 172-residue protein sequence, read N- to C-terminus: Bone marrow stromal antigen 2 (172 aa).

At 1–30 (MAPSFYHYLPVPMDEMGGKQGWGSHRQWLG) the chain is on the cytoplasmic side. Residues 31–51 (AAILVVLFGVTLVILTIYFAV) traverse the membrane as a helical; Signal-anchor for type II membrane protein segment. Residues 52–152 (TANSVACRDG…ETSSTVQVNS (101 aa)) are Extracellular-facing. N-linked (GlcNAc...) asparagine glycosylation is present at N70. Positions 74 to 147 (LLQRQLTRTQ…LRIQKETSST (74 aa)) form a coiled coil. N94 carries N-linked (GlcNAc...) asparagine; atypical glycosylation. N-linked (GlcNAc...) asparagine glycosylation is present at N97. S152 is lipidated: GPI-anchor amidated serine. A propeptide spans 153–172 (GSSMVVSSLLVLKVSLFLLF) (removed in mature form).

Parallel homodimer; disulfide-linked. May form homotetramers under reducing conditions. Isoform 1 and isoform 2 form homodimers and also heterodimers with each other. Dimerization is essential for its antiviral activity. Interacts (via cytoplasmic domain) with ARHGAP44. Interacts with MMP14 (via C-terminal cytoplasmic tail). Interacts with LILRA4/ILT7. Interacts with RNF115. In terms of tissue distribution, in naive mice, specifically expressed on type I interferon-producing cells (at protein level).

The protein localises to the golgi apparatus. The protein resides in the trans-Golgi network. It is found in the cell membrane. It localises to the late endosome. Its subcellular location is the membrane raft. The protein localises to the cytoplasm. The protein resides in the apical cell membrane. Its function is as follows. IFN-induced antiviral host restriction factor which efficiently blocks the release of diverse mammalian enveloped viruses by directly tethering nascent virions to the membranes of infected cells. Acts as a direct physical tether, holding virions to the cell membrane and linking virions to each other. The tethered virions can be internalized by endocytosis and subsequently degraded or they can remain on the cell surface. In either case, their spread as cell-free virions is restricted. Its target viruses belong to diverse families, including retroviridae: human immunodeficiency virus type 1 (HIV-1), mouse mammary tumor virus (MMTV) and murine leukemia virus (MLV), filoviridae: ebola virus (EBOV), arenaviridae: lassa virus (LASV), and rhabdoviridae: vesicular stomatitis virus (VSV). Can inhibit cell surface proteolytic activity of MMP14 causing decreased activation of MMP15 which results in inhibition of cell growth and migration. Can stimulate signaling by LILRA4/ILT7 and consequently provide negative feedback to the production of IFN by plasmacytoid dendritic cells in response to viral infection. Plays a role in the organization of the subapical actin cytoskeleton in polarized epithelial cells. The chain is Bone marrow stromal antigen 2 (Bst2) from Mus musculus (Mouse).